The following is a 110-amino-acid chain: Nucleoid-associated protein Sfum_2790 (110 aa).

It belongs to the YbaB/EbfC family. Homodimer.

It is found in the cytoplasm. Its subcellular location is the nucleoid. In terms of biological role, binds to DNA and alters its conformation. May be involved in regulation of gene expression, nucleoid organization and DNA protection. The sequence is that of Nucleoid-associated protein Sfum_2790 from Syntrophobacter fumaroxidans (strain DSM 10017 / MPOB).